Consider the following 651-residue polypeptide: Translation initiation factor eIF2B subunit delta (651 aa).

A disordered region spans residues 1–108 (MSESEAKSRS…NERNVKKSTL (108 aa)). Ser-2 bears the N-acetylserine mark. Low complexity predominate over residues 11-28 (ATPPSKAKQATPTTTAAA). Composition is skewed to basic and acidic residues over residues 30 to 49 (GEKK…EKAA) and 76 to 90 (KQLQ…EQKQ). Position 106 is a phosphoserine (Ser-106). Thr-121 carries the phosphothreonine modification. A disordered region spans residues 566 to 600 (AMENKPKGNKIGGKKGSEGESKDASNEEDSNSKNI). Positions 580–590 (KGSEGESKDAS) are enriched in basic and acidic residues.

The protein belongs to the eIF-2B alpha/beta/delta subunits family. As to quaternary structure, component of the translation initiation factor 2B (eIF2B) complex which is a heterodecamer of two sets of five different subunits: alpha, beta, gamma, delta and epsilon. Subunits alpha, beta and delta comprise a regulatory subcomplex and subunits epsilon and gamma comprise a catalytic subcomplex. Within the complex, the hexameric regulatory complex resides at the center, with the two heterodimeric catalytic subcomplexes bound on opposite sides.

The protein resides in the cytoplasm. Its subcellular location is the cytosol. Its function is as follows. Acts as a component of the translation initiation factor 2B (eIF2B) complex, which catalyzes the exchange of GDP for GTP on the eukaryotic initiation factor 2 (eIF2) complex gamma subunit. Its guanine nucleotide exchange factor activity is repressed when bound to eIF2 complex phosphorylated on the alpha subunit, thereby limiting the amount of methionyl-initiator methionine tRNA available to the ribosome and consequently global translation is repressed. It activates the synthesis of GCN4 in yeast under amino acid starvation conditions by suppressing the inhibitory effects of multiple AUG codons present in the leader of GCN4 mRNA. It may promote either repression or activation of GCN4 expression depending on amino acid availability. GCD2 is also required for cell viability. Its function can partially be replaced by GCN3 under normal growth conditions in GCD2-defective mutants, under AA starvation conditions GCN3 is an antagonist (GCN4 translational activator). This chain is Translation initiation factor eIF2B subunit delta (GCD2), found in Saccharomyces cerevisiae (strain ATCC 204508 / S288c) (Baker's yeast).